The following is a 227-amino-acid chain: Myogenin (227 aa).

Positions 82–133 constitute a bHLH domain; that stretch reads DRRRAATLREKRRLKKVNEAFEALKRSTLLNPNQRLPKVEILRSAIQYIERL. The tract at residues 147–196 is disordered; it reads QRELRYRPAAPQPAAPSECGSGSSSCSPEWSTQLEFGTNPADHLLSDDQA. Residues 161-175 are compositionally biased toward low complexity; sequence APSECGSGSSSCSPE.

Homodimer and heterodimer. Efficient DNA binding requires dimerization with another bHLH protein.

The protein localises to the nucleus. Acts as a transcriptional activator that promotes transcription of muscle-specific target genes and plays a role in muscle differentiation. Induces fibroblasts to differentiate into myoblasts. Probable sequence specific DNA-binding protein. The chain is Myogenin (MYOG) from Gallus gallus (Chicken).